We begin with the raw amino-acid sequence, 131 residues long: Histone H2A.2 (131 aa).

Ser2 is modified (N-acetylserine). Lys5 and Lys8 each carry N6-acetyllysine. Residue Gln106 is modified to N5-methylglutamine. Ser128 bears the Phosphoserine mark. Positions 128–129 (SQ) match the [ST]-Q motif motif.

Belongs to the histone H2A family. In terms of assembly, the nucleosome is a histone octamer containing two molecules each of H2A, H2B, H3 and H4 assembled in one H3-H4 heterotetramer and two H2A-H2B heterodimers. The octamer wraps approximately 147 bp of DNA. Post-translationally, phosphorylated to form H2AS128ph (gamma-H2A) in response to DNA double-strand breaks (DSBs) generated by exogenous genotoxic agents and by stalled replication forks. Phosphorylation is dependent on the DNA damage checkpoint kinases MEC1/ATR and TEL1/ATM, spreads on either side of a detected DSB site and may mark the surrounding chromatin for recruitment of proteins required for DNA damage signaling and repair. Gamma-H2A is removed from the DNA prior to the strand invasion-primer extension step of the repair process and subsequently dephosphorylated by PPH3, a component of the histone H2A phosphatase complex (HTP-C). Dephosphorylation is necessary for efficient recovery from the DNA damage checkpoint. Acetylated by ESA1 to form H2AK4ac and H2AK7ac.

Its subcellular location is the nucleus. The protein resides in the chromosome. Its function is as follows. Core component of nucleosome which plays a central role in DNA double strand break (DSB) repair. Nucleosomes wrap and compact DNA into chromatin, limiting DNA accessibility to the cellular machineries which require DNA as a template. Histones thereby play a central role in transcription regulation, DNA repair, DNA replication and chromosomal stability. DNA accessibility is regulated via a complex set of post-translational modifications of histones, also called histone code, and nucleosome remodeling. The protein is Histone H2A.2 (HTA2) of Candida glabrata (strain ATCC 2001 / BCRC 20586 / JCM 3761 / NBRC 0622 / NRRL Y-65 / CBS 138) (Yeast).